Consider the following 95-residue polypeptide: Co-chaperonin GroES (95 aa).

This sequence belongs to the GroES chaperonin family. As to quaternary structure, heptamer of 7 subunits arranged in a ring. Interacts with the chaperonin GroEL.

It is found in the cytoplasm. Its function is as follows. Together with the chaperonin GroEL, plays an essential role in assisting protein folding. The GroEL-GroES system forms a nano-cage that allows encapsulation of the non-native substrate proteins and provides a physical environment optimized to promote and accelerate protein folding. GroES binds to the apical surface of the GroEL ring, thereby capping the opening of the GroEL channel. The polypeptide is Co-chaperonin GroES (Chlorobium phaeobacteroides (strain BS1)).